Reading from the N-terminus, the 169-residue chain is 3-hydroxyacyl-[acyl-carrier-protein] dehydratase FabZ (169 aa).

Residue histidine 66 is part of the active site.

This sequence belongs to the thioester dehydratase family. FabZ subfamily.

Its subcellular location is the cytoplasm. The catalysed reaction is a (3R)-hydroxyacyl-[ACP] = a (2E)-enoyl-[ACP] + H2O. Involved in unsaturated fatty acids biosynthesis. Catalyzes the dehydration of short chain beta-hydroxyacyl-ACPs and long chain saturated and unsaturated beta-hydroxyacyl-ACPs. The chain is 3-hydroxyacyl-[acyl-carrier-protein] dehydratase FabZ from Helicobacter hepaticus (strain ATCC 51449 / 3B1).